The following is a 424-amino-acid chain: MAKQIQAIRGMNDILPNQSPVWQKLEAVLRDAVAAFGYSEIRTPIVESTDLFKRSIGEVTDIVEKEMYTFEDRNGDSLTLRPEGTASTVRAGNEHGLLYNQEQRLWYTGPMFRHERPQKGRYRQFHQFGVEVYGIASADIDAEVLMLSNMLWQKLGLTEHVVLEINTLGDSDERAAYRDALIAFLEVHKDKLDEDSQRRMYSNPLRVLDTKNPEIQAILADAPALMDYLGEESKSHFSTLRELLDAVGIQYRVNPRLVRGLDYYNRTVFEWVTDSLGAQGTVLAGGRYDGLVGQLGGKDTPAVGFAMGLERIVLLLETLELAKDVPAAVDVYVTAMGDSCVPAAFAIANELRVALPGVRIMTHCGGGNFKKQIKRADKSGAALALIIGDNELAEGKVAIKPLRNDNEQQLVAREALAETIKALI.

The protein belongs to the class-II aminoacyl-tRNA synthetase family. Homodimer.

Its subcellular location is the cytoplasm. The catalysed reaction is tRNA(His) + L-histidine + ATP = L-histidyl-tRNA(His) + AMP + diphosphate + H(+). This Shewanella amazonensis (strain ATCC BAA-1098 / SB2B) protein is Histidine--tRNA ligase.